The sequence spans 382 residues: uncharacterized protein (382 aa).

Transmembrane regions (helical) follow at residues 8 to 28 (VMLLLCGLLLLTLAIAVLNTL), 45 to 65 (MVSSSYFTGNLVGTLFTGYLI), 75 to 95 (YLASLIFAAGCVGLGGMVGFW), 102 to 122 (FIAGIGCAMIWVVVESALMCS), 131 to 151 (LLAAYMMAYYMGTFLGQLLVS), 157 to 177 (LLHVLPWVTGMILAGILPLLF), 204 to 224 (LGVNGCIISGIVLGSLYGLMP), 231 to 251 (GMANASIGFWMAVLVSAGILG), 274 to 294 (VVILGSIAMLTQAAMAPALFI), 325 to 345 (ALLLSYTVGSLLGPSFAAMLM), and 349 to 369 (SDNLLFIMIASVSFIYLLMLL).

It belongs to the major facilitator superfamily. YcaD (TC 2.A.1.26) family.

It localises to the cell inner membrane. This is an uncharacterized protein from Salmonella gallinarum (strain 287/91 / NCTC 13346).